Here is a 160-residue protein sequence, read N- to C-terminus: Phosphopantetheine adenylyltransferase (160 aa).

Position 10 (Ser-10) interacts with substrate. Residues 10–11 and His-18 contribute to the ATP site; that span reads SF. Substrate-binding residues include Lys-42, Thr-74, and Arg-88. Residues 89-91, Glu-99, and 124-130 contribute to the ATP site; these read GLR and FYYISSR.

The protein belongs to the bacterial CoaD family. As to quaternary structure, homohexamer. Requires Mg(2+) as cofactor.

It is found in the cytoplasm. It carries out the reaction (R)-4'-phosphopantetheine + ATP + H(+) = 3'-dephospho-CoA + diphosphate. It functions in the pathway cofactor biosynthesis; coenzyme A biosynthesis; CoA from (R)-pantothenate: step 4/5. Functionally, reversibly transfers an adenylyl group from ATP to 4'-phosphopantetheine, yielding dephospho-CoA (dPCoA) and pyrophosphate. The sequence is that of Phosphopantetheine adenylyltransferase from Bdellovibrio bacteriovorus (strain ATCC 15356 / DSM 50701 / NCIMB 9529 / HD100).